The sequence spans 106 residues: UPF0145 protein Pfl01_1745 (106 aa).

It belongs to the UPF0145 family.

The protein is UPF0145 protein Pfl01_1745 of Pseudomonas fluorescens (strain Pf0-1).